The sequence spans 185 residues: Large ribosomal subunit protein uL5 (185 aa).

The protein belongs to the universal ribosomal protein uL5 family. In terms of assembly, part of the 50S ribosomal subunit; part of the 5S rRNA/L5/L18/L25 subcomplex. Contacts the 5S rRNA and the P site tRNA. Forms a bridge to the 30S subunit in the 70S ribosome.

Its function is as follows. This is one of the proteins that bind and probably mediate the attachment of the 5S RNA into the large ribosomal subunit, where it forms part of the central protuberance. In the 70S ribosome it contacts protein S13 of the 30S subunit (bridge B1b), connecting the 2 subunits; this bridge is implicated in subunit movement. Contacts the P site tRNA; the 5S rRNA and some of its associated proteins might help stabilize positioning of ribosome-bound tRNAs. The polypeptide is Large ribosomal subunit protein uL5 (Sinorhizobium medicae (strain WSM419) (Ensifer medicae)).